A 387-amino-acid chain; its full sequence is 1-deoxy-D-xylulose 5-phosphate reductoisomerase (387 aa).

NADPH is bound by residues Thr11, Gly12, Ser13, Ile14, Gly37, Arg39, and Asn123. Lys124 is a binding site for 1-deoxy-D-xylulose 5-phosphate. Residue Glu125 coordinates NADPH. Asp147 contributes to the Mn(2+) binding site. 1-deoxy-D-xylulose 5-phosphate is bound by residues Ser148, Glu149, Ser173, and His196. Glu149 provides a ligand contact to Mn(2+). Gly202 provides a ligand contact to NADPH. 4 residues coordinate 1-deoxy-D-xylulose 5-phosphate: Ser209, Asn214, Lys215, and Glu218. Glu218 serves as a coordination point for Mn(2+).

This sequence belongs to the DXR family. Mg(2+) is required as a cofactor. It depends on Mn(2+) as a cofactor.

The enzyme catalyses 2-C-methyl-D-erythritol 4-phosphate + NADP(+) = 1-deoxy-D-xylulose 5-phosphate + NADPH + H(+). It functions in the pathway isoprenoid biosynthesis; isopentenyl diphosphate biosynthesis via DXP pathway; isopentenyl diphosphate from 1-deoxy-D-xylulose 5-phosphate: step 1/6. Catalyzes the NADPH-dependent rearrangement and reduction of 1-deoxy-D-xylulose-5-phosphate (DXP) to 2-C-methyl-D-erythritol 4-phosphate (MEP). In Corynebacterium diphtheriae (strain ATCC 700971 / NCTC 13129 / Biotype gravis), this protein is 1-deoxy-D-xylulose 5-phosphate reductoisomerase.